The sequence spans 1641 residues: Maestro heat-like repeat-containing protein family member 1 (1641 aa).

7 HEAT repeats span residues 3–41, 159–198, 344–382, 385–423, 1048–1086, 1358–1396, and 1605–1641; these read ESSM…ARPV, VPFL…GALE, CSSP…SAAA, EDKK…HGYL, PDQL…ERGG, LMLL…GCPD, and QVDL…VKLA.

The protein belongs to the MROH1 family. Homooligomer; homooligomerizes at lysosome scission sites.

The protein resides in the lysosome membrane. Functionally, lysosome fission factor. Recruited to lysosomes by RAB7 (RAB7A or RAB7B) at scission sites and homooligomerizes to mediate the constriction and scission of lysosomal tubules. May sever membranes by inserting amphipathic helices into one bilayer leaflet. Lysosome fission is required to maintain their steady-state number, shape, size, composition and function, and to accomplish regeneration. The protein is Maestro heat-like repeat-containing protein family member 1 of Homo sapiens (Human).